The following is a 158-amino-acid chain: Small ribosomal subunit protein uS9 (158 aa).

The protein belongs to the universal ribosomal protein uS9 family.

This Brucella abortus (strain S19) protein is Small ribosomal subunit protein uS9.